A 334-amino-acid polypeptide reads, in one-letter code: Uracil-DNA glycosylase (334 aa).

The span at 1–17 shows a compositional bias: basic residues; the sequence is MKRACSRSPSPRRRPSS. 2 disordered regions span residues 1–63 and 79–104; these read MKRA…CRSS and VTFS…AATS. The segment covering 40–50 has biased composition (polar residues); sequence GASNDASTETR. Catalysis depends on Asp-178, which acts as the Proton acceptor.

Belongs to the uracil-DNA glycosylase (UDG) superfamily. UNG family.

It is found in the host nucleus. The enzyme catalyses Hydrolyzes single-stranded DNA or mismatched double-stranded DNA and polynucleotides, releasing free uracil.. Its function is as follows. Excises uracil residues from the DNA which can arise as a result of misincorporation of dUMP residues by DNA polymerase or deamination of cytosines. Therefore may reduce deleterious uracil incorporation into the viral genome, particularly in terminally differentiated cells which lack DNA repair enzymes. The protein is Uracil-DNA glycosylase of Human herpesvirus 1 (strain 17) (HHV-1).